A 118-amino-acid polypeptide reads, in one-letter code: Large ribosomal subunit protein uL18 (118 aa).

Belongs to the universal ribosomal protein uL18 family. As to quaternary structure, part of the 50S ribosomal subunit; part of the 5S rRNA/L5/L18/L25 subcomplex. Contacts the 5S and 23S rRNAs.

Its function is as follows. This is one of the proteins that bind and probably mediate the attachment of the 5S RNA into the large ribosomal subunit, where it forms part of the central protuberance. The polypeptide is Large ribosomal subunit protein uL18 (Phenylobacterium zucineum (strain HLK1)).